Reading from the N-terminus, the 418-residue chain is NADH-quinone oxidoreductase subunit D (418 aa).

The protein belongs to the complex I 49 kDa subunit family. NDH-1 is composed of 14 different subunits. Subunits NuoB, C, D, E, F, and G constitute the peripheral sector of the complex.

It is found in the cell inner membrane. The enzyme catalyses a quinone + NADH + 5 H(+)(in) = a quinol + NAD(+) + 4 H(+)(out). NDH-1 shuttles electrons from NADH, via FMN and iron-sulfur (Fe-S) centers, to quinones in the respiratory chain. The immediate electron acceptor for the enzyme in this species is believed to be ubiquinone. Couples the redox reaction to proton translocation (for every two electrons transferred, four hydrogen ions are translocated across the cytoplasmic membrane), and thus conserves the redox energy in a proton gradient. This chain is NADH-quinone oxidoreductase subunit D, found in Bordetella avium (strain 197N).